Reading from the N-terminus, the 162-residue chain is NADH-quinone oxidoreductase subunit I (162 aa).

4Fe-4S ferredoxin-type domains lie at 52 to 82 (LRRY…IEAG) and 93 to 122 (VRYD…EGPN). [4Fe-4S] cluster contacts are provided by Cys62, Cys65, Cys68, Cys72, Cys102, Cys105, Cys108, and Cys112.

It belongs to the complex I 23 kDa subunit family. As to quaternary structure, NDH-1 is composed of 14 different subunits. Subunits NuoA, H, J, K, L, M, N constitute the membrane sector of the complex. Requires [4Fe-4S] cluster as cofactor.

It is found in the cell inner membrane. The enzyme catalyses a quinone + NADH + 5 H(+)(in) = a quinol + NAD(+) + 4 H(+)(out). Functionally, NDH-1 shuttles electrons from NADH, via FMN and iron-sulfur (Fe-S) centers, to quinones in the respiratory chain. The immediate electron acceptor for the enzyme in this species is believed to be ubiquinone. Couples the redox reaction to proton translocation (for every two electrons transferred, four hydrogen ions are translocated across the cytoplasmic membrane), and thus conserves the redox energy in a proton gradient. The protein is NADH-quinone oxidoreductase subunit I of Bradyrhizobium sp. (strain ORS 278).